The following is a 170-amino-acid chain: MKDNERRILLGRVVGGFGLRGEIKIESWTEPRDAIFRYQPWLLRSPTGTESMLNGARGYETGKRLIATFPGINDRNAVEAICGTEIYVPRSALPPPHPDEYYWVDLEGLQVHTLEGVVLGSVSHLFSNGANDVIVIHGERERLIPFVQPDYVKSVDFEAERIVVDWDPEF.

One can recognise a PRC barrel domain in the interval 98–170 (PDEYYWVDLE…RIVVDWDPEF (73 aa)).

This sequence belongs to the RimM family. In terms of assembly, binds ribosomal protein uS19.

The protein localises to the cytoplasm. An accessory protein needed during the final step in the assembly of 30S ribosomal subunit, possibly for assembly of the head region. Essential for efficient processing of 16S rRNA. May be needed both before and after RbfA during the maturation of 16S rRNA. It has affinity for free ribosomal 30S subunits but not for 70S ribosomes. In Xylella fastidiosa (strain 9a5c), this protein is Ribosome maturation factor RimM.